Reading from the N-terminus, the 251-residue chain is Aliphatic sulfonates import ATP-binding protein SsuB (251 aa).

An ABC transporter domain is found at 3–231 (VSINEVSKYF…PRSKNSESFQ (229 aa)). 39–46 (GPSGCGKS) serves as a coordination point for ATP.

Belongs to the ABC transporter superfamily. Aliphatic sulfonates importer (TC 3.A.1.17.2) family. As to quaternary structure, the complex is composed of two ATP-binding proteins (SsuB), two transmembrane proteins (SsuC) and a solute-binding protein (SsuA).

The protein resides in the cell membrane. It carries out the reaction ATP + H2O + aliphatic sulfonate-[sulfonate-binding protein]Side 1 = ADP + phosphate + aliphatic sulfonateSide 2 + [sulfonate-binding protein]Side 1.. Part of the ABC transporter complex SsuABC involved in aliphatic sulfonates import. Responsible for energy coupling to the transport system. The sequence is that of Aliphatic sulfonates import ATP-binding protein SsuB from Bacillus cereus (strain ZK / E33L).